We begin with the raw amino-acid sequence, 321 residues long: Corticotropin-releasing factor-binding protein (321 aa).

Positions 1-21 (MTPASRPDWCLILLFLAVLRG) are cleaved as a signal peptide. Cystine bridges form between Cys-59-Cys-80, Cys-103-Cys-140, Cys-182-Cys-204, Cys-237-Cys-264, and Cys-277-Cys-317. N-linked (GlcNAc...) asparagine glycosylation occurs at Asn-203.

Belongs to the CRF-binding protein family.

The protein resides in the secreted. Its function is as follows. Binds CRF and inactivates it. May prevent inappropriate pituitary-adrenal stimulation in pregnancy. The sequence is that of Corticotropin-releasing factor-binding protein (crhbp) from Xenopus laevis (African clawed frog).